Reading from the N-terminus, the 509-residue chain is GRAS family protein RAD1 (509 aa).

The GRAS domain occupies 125–508 (EDGCADGMRL…KPIVAASCWK (384 aa)). Positions 132-198 (MRLVQLLIAC…IQPIGSGAGV (67 aa)) are leucine repeat I (LRI). The VHIID stretch occupies residues 217–286 (YRLVYETCPH…SGHGRVRRLR (70 aa)). Positions 248-252 (VHVVD) match the VHIID motif. Residues 299–331 (AIGDELSDYANNLGINLEFSVVQKNLENLQPED) are leucine repeat II (LRII). Residues 340 to 431 (LVVNSILQLH…QFYFAEEIKN (92 aa)) are PFYRE. Positions 434-508 (SCEGPLRMER…KPIVAASCWK (75 aa)) are SAW.

The protein belongs to the GRAS family. Interacts with RAM1 and NSP2. In terms of tissue distribution, expressed in roots under low phosphate (Pi) conditions.

The protein resides in the nucleus. In terms of biological role, transcription factor acting as a regulator of arbuscular mycorrhiza (AM)-related genes (e.g. PT4, STR and RAM2). Required for the morphogenesis of arbuscules upon symbiosis with AM fungi (e.g. Rhizophagus irregularis). Also involved in restricting mycorrhizal colonization of the root meristem. The polypeptide is GRAS family protein RAD1 (Lotus japonicus (Lotus corniculatus var. japonicus)).